The following is a 314-amino-acid chain: uncharacterized protein (314 aa).

To M.leprae ML0607.

This is an uncharacterized protein from Mycobacterium bovis (strain ATCC BAA-935 / AF2122/97).